Reading from the N-terminus, the 97-residue chain is NADH dehydrogenase [ubiquinone] 1 alpha subcomplex subunit 2 (97 aa).

A disulfide bridge links C19 with C53.

Belongs to the complex I NDUFA2 subunit family. Complex I is composed of at least 49 different subunits.

Its subcellular location is the mitochondrion inner membrane. Its function is as follows. Accessory subunit of the mitochondrial membrane respiratory chain NADH dehydrogenase (Complex I), that is believed not to be involved in catalysis. Complex I functions in the transfer of electrons from NADH to the respiratory chain. The immediate electron acceptor for the enzyme is believed to be ubiquinone. The polypeptide is NADH dehydrogenase [ubiquinone] 1 alpha subcomplex subunit 2 (Arabidopsis thaliana (Mouse-ear cress)).